We begin with the raw amino-acid sequence, 301 residues long: uncharacterized protein (301 aa).

The protein belongs to the asfivirus E301R family. In terms of assembly, interacts with host IRF3.

In terms of biological role, plays a role in the inhibition of host innate immune system by acting as a negatively regulator of type I interferon production. Mechanistically, interacts with and prevents host IRF3 nuclear localization to inhibit its transcriptional activity. This is an uncharacterized protein from African swine fever virus (isolate Tick/South Africa/Pretoriuskop Pr4/1996) (ASFV).